A 360-amino-acid polypeptide reads, in one-letter code: Phospho-N-acetylmuramoyl-pentapeptide-transferase (360 aa).

A run of 10 helical transmembrane segments spans residues 27-47 (GAFLTALIFGFVFGKPLINVL), 69-89 (VGTPTMGGLLIVGALLFSTLM), 93-113 (WDNPFVWLVLFVTMSFGLIGF), 134-154 (LLLGFVIAIVAALWASWNHPA), 168-188 (VLLNLGYLYVPFCICVIVGAA), 199-219 (GLAIMPVMIAAGTLGIIAYAV), 239-259 (ILIFTSALFGGGLGFLWYNAP), 262-282 (AVFMGDTGSLALGGALGAIAI), 288-308 (LVLAIVGGLFVVEALSVIIQV), and 337-357 (TIVIRFWIISLILAMIGLATL).

The protein belongs to the glycosyltransferase 4 family. MraY subfamily. Requires Mg(2+) as cofactor.

The protein resides in the cell inner membrane. It carries out the reaction UDP-N-acetyl-alpha-D-muramoyl-L-alanyl-gamma-D-glutamyl-meso-2,6-diaminopimeloyl-D-alanyl-D-alanine + di-trans,octa-cis-undecaprenyl phosphate = di-trans,octa-cis-undecaprenyl diphospho-N-acetyl-alpha-D-muramoyl-L-alanyl-D-glutamyl-meso-2,6-diaminopimeloyl-D-alanyl-D-alanine + UMP. It functions in the pathway cell wall biogenesis; peptidoglycan biosynthesis. Catalyzes the initial step of the lipid cycle reactions in the biosynthesis of the cell wall peptidoglycan: transfers peptidoglycan precursor phospho-MurNAc-pentapeptide from UDP-MurNAc-pentapeptide onto the lipid carrier undecaprenyl phosphate, yielding undecaprenyl-pyrophosphoryl-MurNAc-pentapeptide, known as lipid I. This is Phospho-N-acetylmuramoyl-pentapeptide-transferase from Ruegeria sp. (strain TM1040) (Silicibacter sp.).